The primary structure comprises 697 residues: Long-chain-fatty-acid--CoA ligase 6 (697 aa).

The chain crosses the membrane as a helical; Signal-anchor for type III membrane protein span at residues 25–45 (LSATTLVSMGALAAILAYWFT). Over 46-697 (HRPKALQPPC…QIEELYSISM (652 aa)) the chain is Cytoplasmic.

This sequence belongs to the ATP-dependent AMP-binding enzyme family. The cofactor is Mg(2+). Expressed predominantly in erythrocyte precursors, in particular in reticulocytes, fetal blood cells derived from fetal liver, hemopoietic stem cells from cord blood, bone marrow and brain.

The protein resides in the mitochondrion outer membrane. It is found in the peroxisome membrane. The protein localises to the microsome membrane. Its subcellular location is the endoplasmic reticulum membrane. The enzyme catalyses a long-chain fatty acid + ATP + CoA = a long-chain fatty acyl-CoA + AMP + diphosphate. It catalyses the reaction (5Z,8Z,11Z,14Z)-eicosatetraenoate + ATP + CoA = (5Z,8Z,11Z,14Z)-eicosatetraenoyl-CoA + AMP + diphosphate. The catalysed reaction is hexadecanoate + ATP + CoA = hexadecanoyl-CoA + AMP + diphosphate. It carries out the reaction (E)-hexadec-2-enoate + ATP + CoA = (2E)-hexadecenoyl-CoA + AMP + diphosphate. The enzyme catalyses 15-hydroxy-(5Z,8Z,11Z,13E)-eicosatetraenoate + ATP + CoA = 15-hydroxy-(5Z,8Z,11Z,13E)-eicosatetraenoyl-CoA + AMP + diphosphate. It catalyses the reaction 12-hydroxy-(5Z,8Z,10E,14Z)-eicosatetraenoate + ATP + CoA = 12-hydroxy-(5Z,8Z,10E,14Z)-eicosatetraenoyl-CoA + AMP + diphosphate. The catalysed reaction is 5-hydroxy-(6E,8Z,11Z,14Z)-eicosatetraenoate + ATP + CoA = 5-hydroxy-(6E,8Z,11Z,14Z)-eicosatetraenoyl-CoA + AMP + diphosphate. Its function is as follows. Catalyzes the conversion of long-chain fatty acids to their active form acyl-CoA for both synthesis of cellular lipids, and degradation via beta-oxidation. Plays an important role in fatty acid metabolism in brain and the acyl-CoAs produced may be utilized exclusively for the synthesis of the brain lipid. The polypeptide is Long-chain-fatty-acid--CoA ligase 6 (Homo sapiens (Human)).